The primary structure comprises 295 residues: Nitrogenase iron protein 1 (295 aa).

12–19 (GKGGIGKS) provides a ligand contact to ATP. C100 contacts [4Fe-4S] cluster. R103 carries the post-translational modification ADP-ribosylarginine; by dinitrogenase reductase ADP-ribosyltransferase. C134 provides a ligand contact to [4Fe-4S] cluster.

This sequence belongs to the NifH/BchL/ChlL family. In terms of assembly, homodimer. [4Fe-4S] cluster serves as cofactor. The reversible ADP-ribosylation of Arg-103 inactivates the nitrogenase reductase and regulates nitrogenase activity.

The enzyme catalyses N2 + 8 reduced [2Fe-2S]-[ferredoxin] + 16 ATP + 16 H2O = H2 + 8 oxidized [2Fe-2S]-[ferredoxin] + 2 NH4(+) + 16 ADP + 16 phosphate + 6 H(+). Its function is as follows. The key enzymatic reactions in nitrogen fixation are catalyzed by the nitrogenase complex, which has 2 components: the iron protein and the molybdenum-iron protein. In Mastigocladus laminosus (Fischerella sp.), this protein is Nitrogenase iron protein 1 (nifH1).